The primary structure comprises 353 residues: GTPase Obg (353 aa).

Positions 1–159 (MKFIDEATIK…FELYLELKVL (159 aa)) constitute an Obg domain. Residues 160–332 (ADVGLLGMPN…LTYAIMEHVE (173 aa)) enclose the OBG-type G domain. GTP contacts are provided by residues 166–173 (GMPNAGKS), 191–195 (FTTLH), 213–216 (DVPG), 284–287 (NKVD), and 313–315 (SAL). Residues Ser-173 and Thr-193 each contribute to the Mg(2+) site.

Belongs to the TRAFAC class OBG-HflX-like GTPase superfamily. OBG GTPase family. Monomer. The cofactor is Mg(2+).

The protein localises to the cytoplasm. Functionally, an essential GTPase which binds GTP, GDP and possibly (p)ppGpp with moderate affinity, with high nucleotide exchange rates and a fairly low GTP hydrolysis rate. Plays a role in control of the cell cycle, stress response, ribosome biogenesis and in those bacteria that undergo differentiation, in morphogenesis control. The sequence is that of GTPase Obg from Methylobacillus flagellatus (strain ATCC 51484 / DSM 6875 / VKM B-1610 / KT).